The chain runs to 366 residues: MAHKLLNDTFLRALLRQPTDYTPIWLMRQAGRYLPEYNATRARAGSFLGLAKNPAFATEVTLQPLERYPLDAAILFSDILTVPDAMGLGLEFVTGEGPKFARPVRTEDDVARLAVPDIDATLRYVTDAVREIRTALTDAQGRQRVPLIGFSGSPWTLACYMVEGGGSADFRTVKSMLYARPDLMHRILDVNARAVAAYLNAQIEAGAQAVMIFDTWGGALADGVYQRFSLHYIQQVVSQLKRDHDGEKVPVITFTKGGGLWLDEIAETGVDAVGLDWTVNLSKARERVGGKVALQGNIDPSVLFAPPAAIRMEARAVLDSFGNHPGHVFNLGHGISQFTPPEHVAELVDEVHRHSRAIRSGAHAPA.

Substrate contacts are provided by residues arginine 28–arginine 32, aspartate 78, tyrosine 160, threonine 215, and histidine 333.

Belongs to the uroporphyrinogen decarboxylase family. Homodimer.

It is found in the cytoplasm. The enzyme catalyses uroporphyrinogen III + 4 H(+) = coproporphyrinogen III + 4 CO2. The protein operates within porphyrin-containing compound metabolism; protoporphyrin-IX biosynthesis; coproporphyrinogen-III from 5-aminolevulinate: step 4/4. Its function is as follows. Catalyzes the decarboxylation of four acetate groups of uroporphyrinogen-III to yield coproporphyrinogen-III. The polypeptide is Uroporphyrinogen decarboxylase (Paraburkholderia xenovorans (strain LB400)).